The chain runs to 278 residues: Undecaprenyl-diphosphatase (278 aa).

A run of 8 helical transmembrane segments spans residues 3 to 23 (YILI…IPIS), 42 to 62 (VAYS…IFYF), 88 to 108 (FLVI…LFVI), 112 to 132 (ILGL…IVIY), 152 to 172 (IIIV…RSGM), 190 to 210 (LSFI…VLFS), 225 to 245 (GLLI…NALL), and 253 to 273 (VVLL…LSDI).

Belongs to the UppP family.

Its subcellular location is the cell membrane. The enzyme catalyses di-trans,octa-cis-undecaprenyl diphosphate + H2O = di-trans,octa-cis-undecaprenyl phosphate + phosphate + H(+). In terms of biological role, catalyzes the dephosphorylation of undecaprenyl diphosphate (UPP). This Saccharolobus solfataricus (strain ATCC 35092 / DSM 1617 / JCM 11322 / P2) (Sulfolobus solfataricus) protein is Undecaprenyl-diphosphatase.